Reading from the N-terminus, the 281-residue chain is NADPH-dependent 7-cyano-7-deazaguanine reductase (281 aa).

88 to 90 (IES) serves as a coordination point for substrate. 90–91 (SK) provides a ligand contact to NADPH. Cys189 serves as the catalytic Thioimide intermediate. Asp196 (proton donor) is an active-site residue. 228–229 (HE) is a substrate binding site. 257–258 (RG) is a binding site for NADPH.

This sequence belongs to the GTP cyclohydrolase I family. QueF type 2 subfamily. In terms of assembly, homodimer.

It is found in the cytoplasm. The enzyme catalyses 7-aminomethyl-7-carbaguanine + 2 NADP(+) = 7-cyano-7-deazaguanine + 2 NADPH + 3 H(+). It participates in tRNA modification; tRNA-queuosine biosynthesis. Its function is as follows. Catalyzes the NADPH-dependent reduction of 7-cyano-7-deazaguanine (preQ0) to 7-aminomethyl-7-deazaguanine (preQ1). In Erwinia tasmaniensis (strain DSM 17950 / CFBP 7177 / CIP 109463 / NCPPB 4357 / Et1/99), this protein is NADPH-dependent 7-cyano-7-deazaguanine reductase.